Here is a 126-residue protein sequence, read N- to C-terminus: uncharacterized protein (126 aa).

One can recognise an HTH hxlR-type domain in the interval 20 to 118 (CPSREVLKHV…WIELNLPEVL (99 aa)).

This is an uncharacterized protein from Escherichia coli (strain K12).